The sequence spans 147 residues: Calcium-regulated heat stable protein 1 (147 aa).

A compositionally biased stretch (pro residues) spans 1–12 (MSSEPPPPPQPP). The disordered stretch occupies residues 1–49 (MSSEPPPPPQPPTHQTSIGLLDTPRARDRSPSPLRGNVVPSPLPTRRTR). S2 is modified (N-acetylserine). A phosphoserine mark is found at S30, S32, and S41. T45 carries the phosphothreonine modification. Phosphoserine occurs at positions 52 and 58. The CSD domain occupies 62 to 129 (VYKGVCKCFC…KLQAVEVVIT (68 aa)). Phosphoserine is present on residues S146 and S147.

In terms of assembly, homodimer. Interacts with STYX. Can be phosphorylated by DYRK2 (in vitro). Dephosphorylated by calcineurin in a Ca(2+) dependent manner, and probably by PP2A or PP4 serine phosphatases in cAMP- and PKC-mediated pathways. Widely expressed.

Its subcellular location is the cytoplasm. It is found in the P-body. The protein resides in the cytoplasmic granule. Its function is as follows. Binds mRNA and regulates the stability of target mRNA. The sequence is that of Calcium-regulated heat stable protein 1 (Carhsp1) from Rattus norvegicus (Rat).